The primary structure comprises 192 residues: Transmembrane protein 276 (192 aa).

A signal peptide spans 1 to 32 (MAPKPGAEWSTALSHLVLGVVSLHAAVSTAEA). 4 helical membrane-spanning segments follow: residues 35–55 (GAAA…APGL), 63–83 (AGAW…FHWV), 89–109 (SANL…HLGP), and 114–134 (VAGQ…AVFT).

Its subcellular location is the membrane. This is Transmembrane protein 276 from Homo sapiens (Human).